A 1008-amino-acid polypeptide reads, in one-letter code: SKI family transcriptional corepressor 2 (1008 aa).

2 disordered regions span residues 280–315 (HLLGAPPPPPPPPPLAELAGAPHAHHKRPRFDDDDD) and 514–927 (EPGG…KKDV). Pro residues-rich tracts occupy residues 284–294 (APPPPPPPPPL) and 525–534 (APPPGQPPPV). Composition is skewed to low complexity over residues 535–544 (VANGPGSGPP) and 578–595 (GVTSGTGSASSGAGSVGT). Residues 626–635 (GGKDDAESLA) show a composition bias toward basic and acidic residues. The span at 649-666 (PAHHHHHHHHPHHHHHHP) shows a compositional bias: basic residues. The segment covering 691–703 (APPPPPPPPPLAP) has biased composition (pro residues). 2 stretches are compositionally biased toward acidic residues: residues 724–739 (DSSEDEEDEEEEQEVD) and 748–766 (GEEEEDGRDPEDEEEEDEE). Residues 787–797 (LSEKGSGRDRT) show a composition bias toward basic and acidic residues. A compositionally biased stretch (low complexity) spans 842-855 (SSSGGSRPGSPVHH). Basic and acidic residues-rich tracts occupy residues 856 to 872 (PSLEEEPSYKDNQKPKE), 880 to 890 (TKDDNFSDKNK), and 905 to 915 (FWRERSGEHTQ).

Belongs to the SKI family. As to quaternary structure, interacts with SMAD2 and SMAD3. In terms of tissue distribution, expression is restricted to adult and embryonic central nervous system. Expressed at high levels in the developing cerebellum, ventral metencephalon and myelencephalon at 12.5 dpc (at protein level). In the adult cerebellum, expressed specifically in Purkinje cells.

The protein localises to the nucleus. It is found in the cytoplasm. Acts as a TGF-beta antagonist in the nervous system. Exhibits transcriptional repressor activity. The protein is SKI family transcriptional corepressor 2 of Mus musculus (Mouse).